A 40-amino-acid chain; its full sequence is Photosystem II reaction center protein T (40 aa).

A helical membrane pass occupies residues 3–23 (ALVYTFLLVGTLGIIFFAIFF).

The protein belongs to the PsbT family. PSII is composed of 1 copy each of membrane proteins PsbA, PsbB, PsbC, PsbD, PsbE, PsbF, PsbH, PsbI, PsbJ, PsbK, PsbL, PsbM, PsbT, PsbY, PsbZ, Psb30/Ycf12, at least 3 peripheral proteins of the oxygen-evolving complex and a large number of cofactors. It forms dimeric complexes.

The protein resides in the plastid. It is found in the chloroplast thylakoid membrane. Found at the monomer-monomer interface of the photosystem II (PS II) dimer, plays a role in assembly and dimerization of PSII. PSII is a light-driven water plastoquinone oxidoreductase, using light energy to abstract electrons from H(2)O, generating a proton gradient subsequently used for ATP formation. The sequence is that of Photosystem II reaction center protein T from Anthoceros angustus (Hornwort).